The chain runs to 834 residues: Glycerol-3-phosphate acyltransferase (834 aa).

The HXXXXD motif signature appears at 309–314; it reads CHRSHI.

The protein belongs to the GPAT/DAPAT family.

The protein resides in the cell inner membrane. It catalyses the reaction sn-glycerol 3-phosphate + an acyl-CoA = a 1-acyl-sn-glycero-3-phosphate + CoA. Its pathway is phospholipid metabolism; CDP-diacylglycerol biosynthesis; CDP-diacylglycerol from sn-glycerol 3-phosphate: step 1/3. This is Glycerol-3-phosphate acyltransferase from Pseudomonas aeruginosa (strain LESB58).